The primary structure comprises 248 residues: Trypsin II-P29 (248 aa).

Positions 1–16 (MKFLFLILSCLGAAVA) are cleaved as a signal peptide. A propeptide spans 17-25 (FPGGADDDK) (activation peptide). The region spanning 26 to 246 (IVGGYTCPEH…YVDWIQETIA (221 aa)) is the Peptidase S1 domain. 6 disulfide bridges follow: Cys32/Cys162, Cys50/Cys66, Cys134/Cys235, Cys141/Cys208, Cys173/Cys187, and Cys198/Cys222. His65 (charge relay system) is an active-site residue. Residues Glu77, Asn79, Val82, and Glu87 each coordinate Ca(2+). The active-site Charge relay system is Asp109. Ser202 (charge relay system) is an active-site residue.

It belongs to the peptidase S1 family. It depends on Ca(2+) as a cofactor. In terms of tissue distribution, high levels are seen in the pancreas while lower levels are found in the liver, spleen and thymus.

Its subcellular location is the secreted. The protein localises to the extracellular space. The catalysed reaction is Preferential cleavage: Arg-|-Xaa, Lys-|-Xaa.. This Gallus gallus (Chicken) protein is Trypsin II-P29.